A 135-amino-acid polypeptide reads, in one-letter code: Peptidyl-prolyl cis-trans isomerase FPR2 (135 aa).

Residues 1-17 form the signal peptide; that stretch reads MMFNIYLFVTFFSTILA. The PPIase FKBP-type domain maps to 43 to 132; the sequence is GDKVKVHYTG…VFDVELVDVK (90 aa).

This sequence belongs to the FKBP-type PPIase family. FKBP2 subfamily.

The protein resides in the endoplasmic reticulum membrane. It catalyses the reaction [protein]-peptidylproline (omega=180) = [protein]-peptidylproline (omega=0). Inhibited by both FK506 and rapamycin. Binds FK506 with 15-fold lower affinity than FKB1. In terms of biological role, PPIases accelerate the folding of proteins. It catalyzes the cis-trans isomerization of proline imidic peptide bonds in oligopeptides. FKBP-13 may play a role in protein trafficking in the ER. The polypeptide is Peptidyl-prolyl cis-trans isomerase FPR2 (FPR2) (Saccharomyces cerevisiae (strain ATCC 204508 / S288c) (Baker's yeast)).